The primary structure comprises 136 residues: Flagellar basal-body rod protein FlgC (136 aa).

Belongs to the flagella basal body rod proteins family. In terms of assembly, the basal body constitutes a major portion of the flagellar organelle and consists of four rings (L,P,S, and M) mounted on a central rod. The rod consists of about 26 subunits of FlgG in the distal portion, and FlgB, FlgC and FlgF are thought to build up the proximal portion of the rod with about 6 subunits each.

The protein resides in the bacterial flagellum basal body. The chain is Flagellar basal-body rod protein FlgC (flgC) from Buchnera aphidicola subsp. Baizongia pistaciae (strain Bp).